A 198-amino-acid polypeptide reads, in one-letter code: Na(+)-translocating NADH-quinone reductase subunit E (198 aa).

Helical transmembrane passes span 11-31 (AVFI…FLAV), 35-55 (VSPA…AVPV), 77-97 (FLNF…LEMV), 110-130 (GIFL…SFMV), 140-160 (IVYG…LAGL), and 176-196 (LGIT…FSGI).

It belongs to the NqrDE/RnfAE family. In terms of assembly, composed of six subunits; NqrA, NqrB, NqrC, NqrD, NqrE and NqrF.

It is found in the cell inner membrane. The enzyme catalyses a ubiquinone + n Na(+)(in) + NADH + H(+) = a ubiquinol + n Na(+)(out) + NAD(+). In terms of biological role, NQR complex catalyzes the reduction of ubiquinone-1 to ubiquinol by two successive reactions, coupled with the transport of Na(+) ions from the cytoplasm to the periplasm. NqrA to NqrE are probably involved in the second step, the conversion of ubisemiquinone to ubiquinol. The polypeptide is Na(+)-translocating NADH-quinone reductase subunit E (Haemophilus influenzae (strain ATCC 51907 / DSM 11121 / KW20 / Rd)).